The sequence spans 272 residues: 3-methyl-2-oxobutanoate hydroxymethyltransferase (272 aa).

The Mg(2+) site is built by Asp-43 and Asp-82. Residues 43-44 (DS), Asp-82, and Lys-112 each bind 3-methyl-2-oxobutanoate. A Mg(2+)-binding site is contributed by Glu-114. The Proton acceptor role is filled by Glu-179.

It belongs to the PanB family. As to quaternary structure, homodecamer; pentamer of dimers. Requires Mg(2+) as cofactor.

It localises to the cytoplasm. It catalyses the reaction 3-methyl-2-oxobutanoate + (6R)-5,10-methylene-5,6,7,8-tetrahydrofolate + H2O = 2-dehydropantoate + (6S)-5,6,7,8-tetrahydrofolate. The protein operates within cofactor biosynthesis; (R)-pantothenate biosynthesis; (R)-pantoate from 3-methyl-2-oxobutanoate: step 1/2. Catalyzes the reversible reaction in which hydroxymethyl group from 5,10-methylenetetrahydrofolate is transferred onto alpha-ketoisovalerate to form ketopantoate. The sequence is that of 3-methyl-2-oxobutanoate hydroxymethyltransferase from Staphylococcus aureus (strain COL).